A 493-amino-acid polypeptide reads, in one-letter code: Probable cytosol aminopeptidase (493 aa).

Positions 257 and 262 each coordinate Mn(2+). Lys269 is a catalytic residue. Asp281, Asp341, and Glu343 together coordinate Mn(2+). Arg345 is an active-site residue.

It belongs to the peptidase M17 family. Mn(2+) serves as cofactor.

It localises to the cytoplasm. The catalysed reaction is Release of an N-terminal amino acid, Xaa-|-Yaa-, in which Xaa is preferably Leu, but may be other amino acids including Pro although not Arg or Lys, and Yaa may be Pro. Amino acid amides and methyl esters are also readily hydrolyzed, but rates on arylamides are exceedingly low.. The enzyme catalyses Release of an N-terminal amino acid, preferentially leucine, but not glutamic or aspartic acids.. Its function is as follows. Presumably involved in the processing and regular turnover of intracellular proteins. Catalyzes the removal of unsubstituted N-terminal amino acids from various peptides. This chain is Probable cytosol aminopeptidase, found in Synechococcus sp. (strain WH7803).